We begin with the raw amino-acid sequence, 155 residues long: Endoribonuclease YbeY (155 aa).

3 residues coordinate Zn(2+): histidine 120, histidine 124, and histidine 130.

It belongs to the endoribonuclease YbeY family. Zn(2+) is required as a cofactor.

It is found in the cytoplasm. Its function is as follows. Single strand-specific metallo-endoribonuclease involved in late-stage 70S ribosome quality control and in maturation of the 3' terminus of the 16S rRNA. The protein is Endoribonuclease YbeY of Staphylococcus epidermidis (strain ATCC 35984 / DSM 28319 / BCRC 17069 / CCUG 31568 / BM 3577 / RP62A).